The chain runs to 632 residues: Acyl-coenzyme A oxidase-like protein (632 aa).

FAD is bound at residue 376-381 (TGGMGY).

The protein belongs to the acyl-CoA oxidase family. The cofactor is FAD.

In Mus musculus (Mouse), this protein is Acyl-coenzyme A oxidase-like protein (Acoxl).